A 131-amino-acid chain; its full sequence is Large ribosomal subunit protein bL17 (131 aa).

It belongs to the bacterial ribosomal protein bL17 family. Part of the 50S ribosomal subunit. Contacts protein L32.

The polypeptide is Large ribosomal subunit protein bL17 (Nitrosospira multiformis (strain ATCC 25196 / NCIMB 11849 / C 71)).